Reading from the N-terminus, the 512-residue chain is 2-isopropylmalate synthase (512 aa).

Positions 5–268 (LIIFDTTLRD…ELGIDTQHIV (264 aa)) constitute a Pyruvate carboxyltransferase domain. The Mn(2+) site is built by Asp-14, His-202, His-204, and Asn-239. Residues 394-512 (GFVSLSQRSE…SKAERVAAQG (119 aa)) are regulatory domain.

The protein belongs to the alpha-IPM synthase/homocitrate synthase family. LeuA type 1 subfamily. Homodimer. Mn(2+) serves as cofactor.

It is found in the cytoplasm. The catalysed reaction is 3-methyl-2-oxobutanoate + acetyl-CoA + H2O = (2S)-2-isopropylmalate + CoA + H(+). It participates in amino-acid biosynthesis; L-leucine biosynthesis; L-leucine from 3-methyl-2-oxobutanoate: step 1/4. Its function is as follows. Catalyzes the condensation of the acetyl group of acetyl-CoA with 3-methyl-2-oxobutanoate (2-ketoisovalerate) to form 3-carboxy-3-hydroxy-4-methylpentanoate (2-isopropylmalate). In Paracidovorax citrulli (strain AAC00-1) (Acidovorax citrulli), this protein is 2-isopropylmalate synthase.